We begin with the raw amino-acid sequence, 717 residues long: Probable inactive histone-lysine N-methyltransferase SUVR2 (717 aa).

Basic and acidic residues predominate over residues 61 to 73; that stretch reads QAIQESEEKKADE. The segment at 61–136 is disordered; sequence QAIQESEEKK…LGSPTLEGPS (76 aa). Residues 120–130 show a composition bias toward low complexity; sequence SALASPSLGSP. Residues Cys-445, Cys-446, Cys-449, Cys-453, Cys-462, Cys-529, Cys-533, Cys-535, and Cys-539 each coordinate Zn(2+). One can recognise a Pre-SET domain in the interval 458–547; that stretch reads MACRCATAFN…NCGNRVVQQG (90 aa). The SET domain occupies 550–679; sequence NKLQVFFTPN…AMEELTWDYG (130 aa). S-adenosyl-L-methionine contacts are provided by residues 561–563 and 635–636; these read RGW and NH. Cys-638 is a Zn(2+) binding site. An S-adenosyl-L-methionine-binding site is contributed by Tyr-678. The Post-SET domain maps to 690–706; that stretch reads SPFHCQCGSDFCRVRKQ. Cys-694, Cys-696, and Cys-701 together coordinate Zn(2+).

It belongs to the class V-like SAM-binding methyltransferase superfamily. Histone-lysine methyltransferase family. As to quaternary structure, interacts with SUVR1, CHR19, CHR28 and itself. Interacts with CHR27.

Its subcellular location is the nucleus. The protein resides in the chromosome. Functionally, probable inactive histone-lysine methyltransferase that acts as regulator of transctiptional gene silencing independently of histone H3K9 methylation. Contributes to transcriptional gene silencing at RNA-directed DNA methylation (RdDM) target loci but also at RdDM-independent target loci. Forms a complex with SUVR1 and associates with the SNF2-related chromatin-remodeling proteins CHR19, CHR27, and CHR28, thereby mediating nucleosome positioning and transcriptional silencing. Does not possess histone-lysine methyltransferase activity in vitro, and the conserved catalytic sites of SUVR2 are dispensable for its function in transcriptional gene silencing. This Arabidopsis thaliana (Mouse-ear cress) protein is Probable inactive histone-lysine N-methyltransferase SUVR2 (SUVR2).